The sequence spans 157 residues: SsrA-binding protein (157 aa).

It belongs to the SmpB family.

Its subcellular location is the cytoplasm. Required for rescue of stalled ribosomes mediated by trans-translation. Binds to transfer-messenger RNA (tmRNA), required for stable association of tmRNA with ribosomes. tmRNA and SmpB together mimic tRNA shape, replacing the anticodon stem-loop with SmpB. tmRNA is encoded by the ssrA gene; the 2 termini fold to resemble tRNA(Ala) and it encodes a 'tag peptide', a short internal open reading frame. During trans-translation Ala-aminoacylated tmRNA acts like a tRNA, entering the A-site of stalled ribosomes, displacing the stalled mRNA. The ribosome then switches to translate the ORF on the tmRNA; the nascent peptide is terminated with the 'tag peptide' encoded by the tmRNA and targeted for degradation. The ribosome is freed to recommence translation, which seems to be the essential function of trans-translation. The protein is SsrA-binding protein of Chlorobaculum tepidum (strain ATCC 49652 / DSM 12025 / NBRC 103806 / TLS) (Chlorobium tepidum).